The primary structure comprises 78 residues: Probable [Fe-S]-dependent transcriptional repressor (78 aa).

Iron-sulfur cluster is bound by residues C56, C61, C64, and C70.

It belongs to the FeoC family.

Its function is as follows. May function as a transcriptional regulator that controls feoABC expression. The polypeptide is Probable [Fe-S]-dependent transcriptional repressor (Citrobacter koseri (strain ATCC BAA-895 / CDC 4225-83 / SGSC4696)).